We begin with the raw amino-acid sequence, 462 residues long: Golgi-associated PDZ and coiled-coil motif-containing protein (462 aa).

Residues Lys-83–Ala-194 are a coiled coil. The 84-residue stretch at Lys-288 to Ala-371 folds into the PDZ domain. The disordered stretch occupies residues Thr-427–Lys-449.

In terms of assembly, homooligomer. Interacts with FZD5. Interacts with FZD8. Interacts with GRID2 and BECN1. Interacts with CSPG5. Interacts with CLCN3. Interacts with STX6. Interacts with CFTR. Interacts with ASIC3. Interacts with GOLGA3. Interacts with NLGN1. Interacts with RHOQ. Interacts with MARCHF2; the interaction leads to CFTR ubiquitination and degradation. May interact with CACNG2. Interacts with CCDC62.

It is found in the cytoplasm. The protein localises to the golgi apparatus membrane. Its subcellular location is the golgi apparatus. It localises to the trans-Golgi network membrane. The protein resides in the synapse. It is found in the postsynaptic density. The protein localises to the cell projection. Its subcellular location is the dendrite. Its function is as follows. Plays a role in intracellular protein trafficking and degradation. May regulate CFTR chloride currents and acid-induced ASIC3 currents by modulating cell surface expression of both channels. May also regulate the intracellular trafficking of the ADR1B receptor. May play a role in autophagy. Together with MARCHF2 mediates the ubiquitination and lysosomal degradation of CFTR. Overexpression results in CFTR intracellular retention and degradation in the lysosomes. In Pongo abelii (Sumatran orangutan), this protein is Golgi-associated PDZ and coiled-coil motif-containing protein (GOPC).